Consider the following 382-residue polypeptide: Anthranilate O-methyltransferase 1 (382 aa).

Y20 serves as a coordination point for S-adenosyl-L-homocysteine. Residue Q27 coordinates anthranilate. 6 residues coordinate S-adenosyl-L-homocysteine: C61, N66, D102, L103, S146, and Y147. W168 provides a ligand contact to anthranilate. Mg(2+) contacts are provided by E268 and F270.

It belongs to the methyltransferase superfamily. Type-7 methyltransferase family. SABATH subfamily.

The catalysed reaction is anthranilate + S-adenosyl-L-methionine = O-methyl anthranilate + S-adenosyl-L-homocysteine. In terms of biological role, methyltransferase involved in the biosynthesis of methyl anthranilate in response to stresses. Utilizes anthranilic acid as substrate, but not salicylic acid. Produces exclusively the O-methyl ester. This is Anthranilate O-methyltransferase 1 (AAMT1) from Zea mays (Maize).